A 597-amino-acid polypeptide reads, in one-letter code: Cysteine/serine-rich nuclear protein 3 (597 aa).

Disordered stretches follow at residues 22–64 (EDVD…TPSS) and 348–407 (CQGD…GFVE). Residues 42–52 (SSESADSGDSV) show a composition bias toward low complexity. Positions 53 to 64 (NPSTSNHFTPSS) are enriched in polar residues. The segment covering 348–359 (CQGDEEEEEEDG) has biased composition (acidic residues). The span at 361–376 (SFCSGATDSSTQSLAP) shows a compositional bias: polar residues. A compositionally biased stretch (acidic residues) spans 378–401 (ESDEEEEEEEEEEEEEEEDDDDDK).

Belongs to the AXUD1 family. As to expression, detected only in the brain of 15 dpc, 18 dpc, newborn and P6 mice (at protein level).

It is found in the nucleus. Functionally, binds to the consensus sequence 5'-AGAGTG-3' and has transcriptional activator activity. Plays a role in apoptosis. The chain is Cysteine/serine-rich nuclear protein 3 (Csrnp3) from Mus musculus (Mouse).